Reading from the N-terminus, the 453-residue chain is MNSKIKSIYMVGIGGSGMSGIAEILLNLGYEVHGSDIMESHIIHRLRKLGAIISIGHQAENLGDISVVVKSSAVTEDNPEIQLARQHGIPVIPRAEMLTELMRLRKGVAIAGTHGKTTTTSLTATVFDTAGFDPTVVIGGVLNAYGANARLGQGQYLIAEADESDGSFLLLLPIINVVTNIDLDHLDYYRSFEEIEHAFVTFMNNVPFYGMNVVCGDDPGVQRVLPRVNRQVITYGFESSNHIWAEIIECGIINRFKVIAHGECLGEVILTQPGKHNILNALAAIGVALEVGISPKCCIEGLANFKGVGRRFEYKGEKNGITVIDDYGHHPIEVAATLETARKVFPDRRIVVAFQPHRFSRTQALFGEFCQVLSTVDKLLLTEIYPALEKPIPGINSQNLAQGIQQISKIDVTYYPDIDAVFHALPHVLCAGDVLITLGAGTITTIGPKFLTC.

112 to 118 is a binding site for ATP; sequence GTHGKTT.

This sequence belongs to the MurCDEF family.

The protein resides in the cytoplasm. It catalyses the reaction UDP-N-acetyl-alpha-D-muramate + L-alanine + ATP = UDP-N-acetyl-alpha-D-muramoyl-L-alanine + ADP + phosphate + H(+). The protein operates within cell wall biogenesis; peptidoglycan biosynthesis. In terms of biological role, cell wall formation. This chain is UDP-N-acetylmuramate--L-alanine ligase, found in Lawsonia intracellularis (strain PHE/MN1-00).